Consider the following 336-residue polypeptide: tRNA-dihydrouridine(20/20a) synthase (336 aa).

FMN contacts are provided by residues 24-26 (PMM) and Gln-77. Residue Cys-107 is the Proton donor of the active site. FMN-binding positions include Lys-146, His-178, 218 to 220 (NGG), and 240 to 241 (GR).

This sequence belongs to the Dus family. DusA subfamily. The cofactor is FMN.

It catalyses the reaction 5,6-dihydrouridine(20) in tRNA + NADP(+) = uridine(20) in tRNA + NADPH + H(+). The catalysed reaction is 5,6-dihydrouridine(20) in tRNA + NAD(+) = uridine(20) in tRNA + NADH + H(+). The enzyme catalyses 5,6-dihydrouridine(20a) in tRNA + NADP(+) = uridine(20a) in tRNA + NADPH + H(+). It carries out the reaction 5,6-dihydrouridine(20a) in tRNA + NAD(+) = uridine(20a) in tRNA + NADH + H(+). Functionally, catalyzes the synthesis of 5,6-dihydrouridine (D), a modified base found in the D-loop of most tRNAs, via the reduction of the C5-C6 double bond in target uridines. Specifically modifies U20 and U20a in tRNAs. The protein is tRNA-dihydrouridine(20/20a) synthase of Pseudomonas putida (strain ATCC 47054 / DSM 6125 / CFBP 8728 / NCIMB 11950 / KT2440).